A 504-amino-acid chain; its full sequence is Maturase K (504 aa).

Belongs to the intron maturase 2 family. MatK subfamily.

The protein localises to the plastid. It localises to the chloroplast. Its function is as follows. Usually encoded in the trnK tRNA gene intron. Probably assists in splicing its own and other chloroplast group II introns. This is Maturase K from Quercus cerris (Turkey oak).